A 269-amino-acid polypeptide reads, in one-letter code: Formamidopyrimidine-DNA glycosylase (269 aa).

Pro2 functions as the Schiff-base intermediate with DNA in the catalytic mechanism. The active-site Proton donor is Glu3. Lys57 functions as the Proton donor; for beta-elimination activity in the catalytic mechanism. 3 residues coordinate DNA: His90, Arg109, and Lys150. The FPG-type zinc finger occupies 235–269 (QVYGRKGEPCRVCGTPIVATKHAQRATFYCRHCQK). Arg259 functions as the Proton donor; for delta-elimination activity in the catalytic mechanism.

Belongs to the FPG family. In terms of assembly, monomer. The cofactor is Zn(2+).

The enzyme catalyses Hydrolysis of DNA containing ring-opened 7-methylguanine residues, releasing 2,6-diamino-4-hydroxy-5-(N-methyl)formamidopyrimidine.. It catalyses the reaction 2'-deoxyribonucleotide-(2'-deoxyribose 5'-phosphate)-2'-deoxyribonucleotide-DNA = a 3'-end 2'-deoxyribonucleotide-(2,3-dehydro-2,3-deoxyribose 5'-phosphate)-DNA + a 5'-end 5'-phospho-2'-deoxyribonucleoside-DNA + H(+). Functionally, involved in base excision repair of DNA damaged by oxidation or by mutagenic agents. Acts as a DNA glycosylase that recognizes and removes damaged bases. Has a preference for oxidized purines, such as 7,8-dihydro-8-oxoguanine (8-oxoG). Has AP (apurinic/apyrimidinic) lyase activity and introduces nicks in the DNA strand. Cleaves the DNA backbone by beta-delta elimination to generate a single-strand break at the site of the removed base with both 3'- and 5'-phosphates. The protein is Formamidopyrimidine-DNA glycosylase of Salmonella choleraesuis (strain SC-B67).